The chain runs to 265 residues: MTTQSLKAEAVALEADVMALDAEAKALNDKLESLDLAGRLALIAGLEGRAVFTTSLGIEDQVITAAIGSNRLDIEVATLKTGRLFNETVALIDQTEETYDILIKRYYPEKADIDAYVAQYGMNGFYESVEARHACCGVRKLKPLARALDGASYWITGLRRGQSGNRATTPFAEADVERGLIKINPLADWGIETIQAHVAAEGIPVNPLHSRGYPSIGCEPCTRAIKPGEPERAGRWWWENDEKRECGLHVPEAASSIIPNASNAA.

Positions 135, 136, 218, and 221 each coordinate [4Fe-4S] cluster. Residue C246 is the Nucleophile; cysteine thiosulfonate intermediate of the active site.

It belongs to the PAPS reductase family. CysH subfamily. The cofactor is [4Fe-4S] cluster.

Its subcellular location is the cytoplasm. The catalysed reaction is [thioredoxin]-disulfide + sulfite + AMP + 2 H(+) = adenosine 5'-phosphosulfate + [thioredoxin]-dithiol. Its pathway is sulfur metabolism; hydrogen sulfide biosynthesis; sulfite from sulfate. Its function is as follows. Catalyzes the formation of sulfite from adenosine 5'-phosphosulfate (APS) using thioredoxin as an electron donor. The polypeptide is Adenosine 5'-phosphosulfate reductase (Rhizobium meliloti (strain 1021) (Ensifer meliloti)).